Here is a 31-residue protein sequence, read N- to C-terminus: Protamine-1B (31 aa).

The segment at methionine 1–arginine 31 is disordered.

As to expression, testis.

The protein resides in the nucleus. Its subcellular location is the chromosome. In terms of biological role, protamines substitute for histones in the chromatin of sperm during the haploid phase of spermatogenesis. They compact sperm DNA into a highly condensed, stable and inactive complex. This chain is Protamine-1B, found in Oncorhynchus mykiss (Rainbow trout).